Here is a 349-residue protein sequence, read N- to C-terminus: KH domain-containing, RNA-binding, signal transduction-associated protein 2 (349 aa).

In terms of domain architecture, KH spans 65-135; the sequence is LIPVKQYPKF…HLSDELHVLI (71 aa). Disordered regions lie at residues 181-263 and 320-349; these read SEES…PPPA and EEWT…YGRY. Over residues 218 to 231 the composition is skewed to low complexity; the sequence is RGVLTPRGTTVTRG. An omega-N-methylarginine mark is found at R230 and R240. Basic and acidic residues predominate over residues 340 to 349; that stretch reads GYREHPYGRY.

This sequence belongs to the KHDRBS family. Self-associates to form homooligomers. Interacts with SAFB, SFRS9 and YTHDC1. Found in a complex with KHDRBS1, KHDRBS2 and KHDRBS3. Interacts with RBMX. Interacts with the SH3 domains of FYN and PLCG1. Interacts with the SH2 domains of FYN, GRAP2, PLCG1 and RASA1. Interacts with RBMX. In terms of processing, methylated. Post-translationally, phosphorylated on tyrosine residues by FYN. Tyrosine phosphorylated by PTK6 and SRC. Tyrosine phosphorylated by SRC during mitosis. In terms of tissue distribution, expressed in the cortex, cerebellum, striatum, midbrain, brainstem and thalamus of the brain (at protein level). Expressed in neurons (at protein level). Expressed in brain and testis. Expressed in the dentate gyrus of the hippocampus.

It is found in the nucleus. Its function is as follows. RNA-binding protein that plays a role in the regulation of alternative splicing and influences mRNA splice site selection and exon inclusion. Its phosphorylation by FYN inhibits its ability to regulate splice site selection. Induces an increased concentration-dependent incorporation of exon in CD44 pre-mRNA by direct binding to purine-rich exonic enhancer. May function as an adapter protein for Src kinases during mitosis. Binds both poly(A) and poly(U) homopolymers. Phosphorylation by PTK6 inhibits its RNA-binding ability. The chain is KH domain-containing, RNA-binding, signal transduction-associated protein 2 (Khdrbs2) from Rattus norvegicus (Rat).